Consider the following 120-residue polypeptide: NAD(P)H-quinone oxidoreductase subunit 3, chloroplastic (120 aa).

Helical transmembrane passes span 9 to 29 (IFWAFLIISSLIPILAFFVSG), 64 to 84 (MFALVFVVFDVETVFLYPWAM), and 88 to 108 (VLGISVFVEALIFVLILIVGL).

It belongs to the complex I subunit 3 family. In terms of assembly, NDH is composed of at least 16 different subunits, 5 of which are encoded in the nucleus.

It is found in the plastid. It localises to the chloroplast thylakoid membrane. The catalysed reaction is a plastoquinone + NADH + (n+1) H(+)(in) = a plastoquinol + NAD(+) + n H(+)(out). The enzyme catalyses a plastoquinone + NADPH + (n+1) H(+)(in) = a plastoquinol + NADP(+) + n H(+)(out). Its function is as follows. NDH shuttles electrons from NAD(P)H:plastoquinone, via FMN and iron-sulfur (Fe-S) centers, to quinones in the photosynthetic chain and possibly in a chloroplast respiratory chain. The immediate electron acceptor for the enzyme in this species is believed to be plastoquinone. Couples the redox reaction to proton translocation, and thus conserves the redox energy in a proton gradient. This chain is NAD(P)H-quinone oxidoreductase subunit 3, chloroplastic, found in Daucus carota (Wild carrot).